Reading from the N-terminus, the 220-residue chain is Phosphoserine phosphatase (220 aa).

Asp-11 serves as the catalytic Nucleophile. Mg(2+)-binding residues include Asp-11 and Asp-13. Residue Asp-13 is the Proton donor of the active site. Residues Glu-20, Arg-56, Ser-99–Gly-100, and Lys-144 contribute to the substrate site. Asp-167 lines the Mg(2+) pocket. Asn-170 contributes to the substrate binding site.

This sequence belongs to the HAD-like hydrolase superfamily. SerB family. Mg(2+) is required as a cofactor.

It carries out the reaction O-phospho-L-serine + H2O = L-serine + phosphate. It catalyses the reaction O-phospho-D-serine + H2O = D-serine + phosphate. It participates in amino-acid biosynthesis; L-serine biosynthesis; L-serine from 3-phospho-D-glycerate: step 3/3. The protein is Phosphoserine phosphatase of Idiomarina loihiensis (strain ATCC BAA-735 / DSM 15497 / L2-TR).